The chain runs to 180 residues: Translation initiation factor IF-3 (180 aa).

This sequence belongs to the IF-3 family. In terms of assembly, monomer.

Its subcellular location is the cytoplasm. IF-3 binds to the 30S ribosomal subunit and shifts the equilibrium between 70S ribosomes and their 50S and 30S subunits in favor of the free subunits, thus enhancing the availability of 30S subunits on which protein synthesis initiation begins. The sequence is that of Translation initiation factor IF-3 from Xylella fastidiosa (strain Temecula1 / ATCC 700964).